An 81-amino-acid polypeptide reads, in one-letter code: MVVIRLARGGSKHRPFYNVIVTDSRSRRDGRFIERVGFYNPVANEKQERVRLNADRLNHWIAQGAQVSDSVAKLIKEQKAA.

This sequence belongs to the bacterial ribosomal protein bS16 family.

This is Small ribosomal subunit protein bS16 from Neisseria meningitidis serogroup C (strain 053442).